We begin with the raw amino-acid sequence, 440 residues long: WAS/WASL-interacting protein family member 2 (440 aa).

Positions 1-18 are enriched in pro residues; sequence MPIPPPPPPPPGPPPPPT. Residues 1-36 are disordered; the sequence is MPIPPPPPPPPGPPPPPTFHQANTEQPKLSRDEQRG. Residues 36-53 form the WH2 domain; it reads GRGALLQDICKGTKLKKV. The residue at position 37 (Arg-37) is an Asymmetric dimethylarginine. The segment at 49–52 is binds actin; that stretch reads KLKK. Disordered regions lie at residues 56-387 and 419-440; these read INDR…DSIT and RIYP…PILR. The segment covering 116-133 has biased composition (low complexity); it reads PSSRAAAPRPPVSAASGR. Over residues 161–172 the composition is skewed to polar residues; it reads RPNTTSSTGMKH. 4 stretches are compositionally biased toward pro residues: residues 176 to 193, 222 to 236, 249 to 262, and 356 to 378; these read APPP…PTPL, EGPP…PPSP, APPP…PGVP, and RGKP…PPPL.

Belongs to the verprolin family. As to quaternary structure, interacts with WASL and WASP, and this interaction results in cytoplasmic relocation of these two proteins along actin filaments. Interacts with NCK2 resulting in the localization to sites of focal adhesions. No interaction was seen with WASF2 and WASF3. Expressed mainly in brain, colon, lung and stomach (at protein level). Ubiquitously expressed, with high expression in brain, kidney, lung, and placenta.

The protein localises to the cytoplasm. It is found in the cytoskeleton. Functionally, plays an active role in the formation of cell surface protrusions downstream of activated PDGFB receptors. Plays an important role in actin-microspike formation through cooperation with WASL. May cooperate with WASP and WASL to induce mobilization and reorganization of the actin filament system. The sequence is that of WAS/WASL-interacting protein family member 2 (WIPF2) from Homo sapiens (Human).